We begin with the raw amino-acid sequence, 151 residues long: Small ribosomal subunit protein uS15 (151 aa).

The disordered stretch occupies residues 1 to 20 (MARLHSGKRGSSGSTRPLRT).

It belongs to the universal ribosomal protein uS15 family. Part of the 30S ribosomal subunit.

The polypeptide is Small ribosomal subunit protein uS15 (Methanococcus maripaludis (strain DSM 14266 / JCM 13030 / NBRC 101832 / S2 / LL)).